A 133-amino-acid polypeptide reads, in one-letter code: Cytochrome c-type biogenesis protein CcmE (133 aa).

The Cytoplasmic segment spans residues 1-7 (MKKKHKR). Residues 8 to 28 (LLITSGIFCFLSCIVFFILTT) traverse the membrane as a helical; Signal-anchor for type II membrane protein segment. Residues 29 to 133 (LKENISFFYT…YMPKVLKQIP (105 aa)) lie on the Periplasmic side of the membrane. Heme is bound by residues His-120 and Tyr-124.

This sequence belongs to the CcmE/CycJ family.

Its subcellular location is the cell inner membrane. Heme chaperone required for the biogenesis of c-type cytochromes. Transiently binds heme delivered by CcmC and transfers the heme to apo-cytochromes in a process facilitated by CcmF and CcmH. In Wolbachia sp. subsp. Drosophila simulans (strain wRi), this protein is Cytochrome c-type biogenesis protein CcmE.